The primary structure comprises 618 residues: DNA mismatch repair protein MutL (618 aa).

The protein belongs to the DNA mismatch repair MutL/HexB family.

Its function is as follows. This protein is involved in the repair of mismatches in DNA. It is required for dam-dependent methyl-directed DNA mismatch repair. May act as a 'molecular matchmaker', a protein that promotes the formation of a stable complex between two or more DNA-binding proteins in an ATP-dependent manner without itself being part of a final effector complex. The sequence is that of DNA mismatch repair protein MutL from Porphyromonas gingivalis (strain ATCC BAA-308 / W83).